A 515-amino-acid chain; its full sequence is MDEFHRNGKEDSSWQQCFLYPLFFQEDLYAIYHDHYLDGSSSSEPMEHVSSNDQFSFLTVKRLIGQIRQQNHSIVLFVNCDPNPLVERNKSSYYESVLEGLTLVLEVPFSIRSKYSVEGINEWKSFRSIHSIFPFLEDKFPHSNYISDTRIPYSIHPEILVRTFRRWIRDAPSLHPLRSVLYEYRNSPENLQRSIIVAPRVNTRFFLFLWNHYVYECESILVPLLKRSSHLRSLSHGSFPERTHFDRKIKHIIIFSRRNSLKRIWSLKDPNIHYFRYGERSIIAIKGTHLLVKKCRYHLPIFRQCYFHLWSEPYRVCSHQLSKNCSSSLGYFLRIRMKPLLVRTKMLDELFIADLITGEFDPIVPIVPIIGLLAREKFCDISGRPISKLSWTSLTDDDILDRFDRIWRNLFHYYSGSFGRDGLYRIKYILSLSCAKTLACKHKSTIRVVRKELGPELFKKSFSKEREFDSPPFSSKAAARSQRERIWHSDIPQINPLANSWQKIQDLKIENLFDQ.

It belongs to the intron maturase 2 family. MatK subfamily.

The protein localises to the plastid. Its subcellular location is the chloroplast. Functionally, usually encoded in the trnK tRNA gene intron. Probably assists in splicing its own and other chloroplast group II introns. This chain is Maturase K, found in Larix laricina (Tamarack).